Here is a 138-residue protein sequence, read N- to C-terminus: Thyrotropin subunit beta (138 aa).

A signal peptide spans M1–S20. 6 disulfides stabilise this stretch: C22/C72, C36/C87, C39/C125, C47/C103, C51/C105, and C108/C115. An N-linked (GlcNAc...) asparagine glycan is attached at N43. Residues V133–I138 constitute a propeptide that is removed on maturation.

This sequence belongs to the glycoprotein hormones subunit beta family. In terms of assembly, heterodimer of a common alpha chain and a unique beta chain which confers biological specificity to thyrotropin, lutropin, follitropin and gonadotropin.

The protein localises to the secreted. Indispensable for the control of thyroid structure and metabolism. This Equus caballus (Horse) protein is Thyrotropin subunit beta (TSHB).